Here is a 575-residue protein sequence, read N- to C-terminus: RecBCD enzyme subunit RecD (575 aa).

170–177 (GGPGTGKT) serves as a coordination point for ATP.

The protein belongs to the RecD family. In terms of assembly, heterotrimer of RecB, RecC and RecD. All subunits contribute to DNA-binding.

The catalysed reaction is Couples ATP hydrolysis with the unwinding of duplex DNA at the replication fork by translocating in the 5'-3' direction. This creates two antiparallel DNA single strands (ssDNA). The leading ssDNA polymer is the template for DNA polymerase III holoenzyme which synthesizes a continuous strand.. The enzyme catalyses ATP + H2O = ADP + phosphate + H(+). Functionally, a helicase/nuclease that prepares dsDNA breaks (DSB) for recombinational DNA repair. Binds to DSBs and unwinds DNA via a highly rapid and processive ATP-dependent bidirectional helicase activity. Holoenzyme degrades any linearized DNA that is unable to undergo homologous recombination. In the holoenzyme this subunit has ssDNA-dependent ATPase and 5'-3' helicase activity. When added to pre-assembled RecBC greatly stimulates nuclease activity and augments holoenzyme processivity. Unlike the case in E.coli, suppresses RecA-dependent homologous recombination, is instead required for single-strand annealing pathway repair of DSB. Its function is as follows. A helicase/nuclease that prepares dsDNA breaks (DSB) for recombinational DNA repair. Binds to DSBs and unwinds DNA via a highly rapid and processive ATP-dependent bidirectional helicase activity. Unwinds dsDNA until it encounters a Chi (crossover hotspot instigator) sequence from the 3' direction. Cuts ssDNA a few nucleotides 3' to the Chi site. The properties and activities of the enzyme are changed at Chi. The Chi-altered holoenzyme produces a long 3'-ssDNA overhang and facilitates RecA-binding to the ssDNA for homologous DNA recombination and repair. Holoenzyme degrades any linearized DNA that is unable to undergo homologous recombination. In the holoenzyme this subunit has ssDNA-dependent ATPase and 5'-3' helicase activity. When added to pre-assembled RecBC greatly stimulates nuclease activity and augments holoenzyme processivity. Negatively regulates the RecA-loading ability of RecBCD. The protein is RecBCD enzyme subunit RecD of Mycobacterium tuberculosis (strain CDC 1551 / Oshkosh).